Reading from the N-terminus, the 68-residue chain is Protein SlyX homolog (68 aa).

The protein belongs to the SlyX family.

The sequence is that of Protein SlyX homolog from Pseudomonas fluorescens (strain SBW25).